Reading from the N-terminus, the 723-residue chain is MSEKQVFSTEWAGKTLSVEVGQLAKQASGAALIRYGDTVVLTAAVGSKKPRPGDFFPLTVNYEEKMYSVGKVPGGFLKREGRPSDRATLTARLIDRPIRPLFAEGFRNEVQITSTVFSVDQDCSPEMAAMLGSSVALVISDIPFEGPIAGVDVGRIDGKYVINPTIEQAEKSDISLTVAGTYDAINMVEAGAKEVSEEAMLEAIMFGHEEIKRLCEFQQQIIAAVGKEKREIELFVSDPELEAEVKAASEGKMKVAIKTEEKKAREAAIEEVKEEILESYKAKELENETEILSEVAHILEMIEKDEMRRLISQDKIRPDGRKVNEIRPLSSEVGMLPRVHGSGLFTRGQTQALSVCTLAPLREHQIIDGLGTEEYKRFMHHYNFPQFSVGETGPRRAPGRREIGHGALGERALQYVIPSEEDFPYTIRLVSEVLESNGSSSQASICGSTLAMLDAGVPIKAPVAGIAMGLVKLGDDYTILSDIQGMEDHFGDMDFKVAGTKDGITALQMDIKIDGLSRQILDEALTQAKEGRLHILEHLTSTISAPREELSAYAPKIITLNIKPEKIKDVIGPGGKQINAIIEETGVKIDIEQDGTVYIASQDQAMNRKAIAIIEDIVREVEVGEVYTGKVRRIEKFGAFVELFKGTDGLVHISELAHERVGKVEDILKLGDEVTVKVIEVDHQGRVNLSRKALLEKKEQPEGDKKPQAEKKFYPKTKKPESK.

Mg(2+) contacts are provided by Asp488 and Asp494. Residues 555–614 (PKIITLNIKPEKIKDVIGPGGKQINAIIEETGVKIDIEQDGTVYIASQDQAMNRKAIAII) form the KH domain. The S1 motif domain maps to 624–692 (GEVYTGKVRR…HQGRVNLSRK (69 aa)). Residues 692-723 (KALLEKKEQPEGDKKPQAEKKFYPKTKKPESK) are disordered. The span at 693–723 (ALLEKKEQPEGDKKPQAEKKFYPKTKKPESK) shows a compositional bias: basic and acidic residues.

It belongs to the polyribonucleotide nucleotidyltransferase family. It depends on Mg(2+) as a cofactor.

It is found in the cytoplasm. It catalyses the reaction RNA(n+1) + phosphate = RNA(n) + a ribonucleoside 5'-diphosphate. In terms of biological role, involved in mRNA degradation. Catalyzes the phosphorolysis of single-stranded polyribonucleotides processively in the 3'- to 5'-direction. The protein is Polyribonucleotide nucleotidyltransferase of Listeria welshimeri serovar 6b (strain ATCC 35897 / DSM 20650 / CCUG 15529 / CIP 8149 / NCTC 11857 / SLCC 5334 / V8).